A 423-amino-acid polypeptide reads, in one-letter code: MKIERLKGFRDHYPDDMEIRYDFIKKMMDTAISFGYKMIDFPSLESMDLYRLKSGTELVEQTFSFTDKGGREVTMIPEATPSTMRMLTSRKDIKMPARWFSIPKVWRYEEPQEGRYREHIQFNADMFGADSPEADAEIIGLAATILDNLGLSGQYEINVNDRYLMELILRDLGSNNPVDLFPVIDRFKKMDLTDFKKRLLKDLDDDASEKLISLLMNRIDINDVERLLNGYANDVMERVKRLKDTFALTSKYTKSKLNIDLSVVRGLSYYTGIVFEAFDISGELRAILGGGRYDNLSNLFINESIPAVGFAIGDAVIELLLKRNNLWNYKDKRKRYYVVNISSSPEAHIEILNKIRGSGNIAISEVNKRRMQTIIKYAESIKCDFLIIIGDRELSSKKMTIKNLRTQEQAEMNIDDFINNINS.

It belongs to the class-II aminoacyl-tRNA synthetase family.

The protein resides in the cytoplasm. It carries out the reaction tRNA(His) + L-histidine + ATP = L-histidyl-tRNA(His) + AMP + diphosphate + H(+). The chain is Histidine--tRNA ligase from Picrophilus torridus (strain ATCC 700027 / DSM 9790 / JCM 10055 / NBRC 100828 / KAW 2/3).